The sequence spans 345 residues: MKIAVDAMGGDYAPDEIVKGIELARDAYPDLEFLLYGQTAKVQPLLQNTTRIELVDAPEVIAMEDEPVRAVRRKKQSSIVLAATAVREGQADAFFSAGNTGAVLAAGLLIIGRIKGIERPGLTTTLPVLQRPDQSSFVMLDVGANADTKPFNVVQYAIMGQYYAQSVMHVDNPRIGLLNNGTEADKGDMAHRAIHDALANMAEINFVGNVESRELLNGAADVVVTDGFTGNATLKAVEGTALSMLKLIKGEIMSGGLGGKIGASMLKPVFRQVRSAMDYSQYGGAVLLGLKAPVVKTHGSTKAETVKNTIGQIQELLASHSADQLGTYFAEHSDEMAALKENLKA.

The protein belongs to the PlsX family. As to quaternary structure, homodimer. Probably interacts with PlsY.

The protein resides in the cytoplasm. The enzyme catalyses a fatty acyl-[ACP] + phosphate = an acyl phosphate + holo-[ACP]. It participates in lipid metabolism; phospholipid metabolism. Functionally, catalyzes the reversible formation of acyl-phosphate (acyl-PO(4)) from acyl-[acyl-carrier-protein] (acyl-ACP). This enzyme utilizes acyl-ACP as fatty acyl donor, but not acyl-CoA. The polypeptide is Phosphate acyltransferase (Levilactobacillus brevis (strain ATCC 367 / BCRC 12310 / CIP 105137 / JCM 1170 / LMG 11437 / NCIMB 947 / NCTC 947) (Lactobacillus brevis)).